A 220-amino-acid chain; its full sequence is DNA replication complex GINS protein SLD5 (220 aa).

It belongs to the GINS4/SLD5 family. Component of the GINS complex. Interacts with EOL1 in the nucleus.

The protein resides in the nucleus. Its function is as follows. The GINS complex plays an essential role in the initiation of DNA replication. Required during embryogenesis. The protein is DNA replication complex GINS protein SLD5 of Arabidopsis thaliana (Mouse-ear cress).